Reading from the N-terminus, the 1333-residue chain is NPC1-like intracellular cholesterol transporter 1 (1333 aa).

A signal peptide spans 1–20 (MAAAWQGWLLWALLLNSAQG). The Extracellular segment spans residues 21 to 284 (ELYTPTHKAG…SFYMGRMPGW (264 aa)). Disulfide bonds link Cys-32–Cys-90, Cys-38–Cys-56, Cys-77–Cys-125, Cys-91–Cys-129, Cys-113–Cys-254, Cys-116–Cys-172, Cys-189–Cys-197, Cys-243–Cys-259, and Cys-256–Cys-263. The chain crosses the membrane as a helical span at residues 285–305 (LALIIIFTAVFVLLSVVLVYL). Over 306–352 (RVASNRNKNKTAGSQEAPNLPRKRRFSPHTVLGRFFESWGTRVASWP) the chain is Cytoplasmic. A helical transmembrane segment spans residues 353 to 373 (LTVLALSFIVVIALSVGLTFI). Residues 374-632 (ELTTDPVELW…DEINRTTIQD (259 aa)) lie on the Extracellular side of the membrane. 2 cysteine pairs are disulfide-bonded: Cys-471-Cys-485 and Cys-525-Cys-542. The SSD domain maps to 632-797 (DLPVFAISYL…MTAFVALLSL (166 aa)). A helical transmembrane segment spans residues 633-653 (LPVFAISYLIVFLYISLALGS). Over 654–665 (YSRWSRVAVDSK) the chain is Cytoplasmic. Residues 666–686 (ATLGLGGVAVVLGAVVAAMGF) traverse the membrane as a helical segment. Topologically, residues 687–696 (YSYLGVPSSL) are extracellular. Residues 697-717 (VIIQVVPFLVLAVGADNIFIF) traverse the membrane as a helical segment. Residues 718–742 (VLEYQRLPRMPGEQREAHIGRTLGS) lie on the Cytoplasmic side of the membrane. A helical membrane pass occupies residues 743-763 (VAPSMLLCSLSEAICFFLGAL). At 764 to 776 (TSMPAVRTFALTS) the chain is on the extracellular side. The helical transmembrane segment at 777-797 (GLAIIFDFLLQMTAFVALLSL) threads the bilayer. Residues 798 to 846 (DSKRQEASRPDVVCCFSSRNLPPPKQKEGLLLCFFRKIYTPFLLHRFIR) are Cytoplasmic-facing. Residues 847 to 867 (PVVLLLFLVLFGANLYLMCNI) traverse the membrane as a helical segment. At 868-1113 (SVGLDQDLAL…QQYLTVLPEG (246 aa)) the chain is on the extracellular side. 3 cysteine pairs are disulfide-bonded: Cys-920–Cys-925, Cys-967–Cys-1025, and Cys-981–Cys-990. The chain crosses the membrane as a helical span at residues 1114 to 1134 (IFTLALCFVPTFVVCYLLLGL). The Cytoplasmic segment spans residues 1135-1142 (DIRSGILN). The helical transmembrane segment at 1143-1163 (LLSIIMILVDTIGLMAVWGIS) threads the bilayer. Over 1164–1165 (YN) the chain is Extracellular. The chain crosses the membrane as a helical span at residues 1166–1186 (AVSLINLVTAVGMSVEFVSHI). Residues 1187–1206 (TRSFAVSTKPTRLERAKDAT) are Cytoplasmic-facing. A helical transmembrane segment spans residues 1207-1227 (IFMGSAVFAGVAMTNFPGILI). At 1228 to 1242 (LGFAQAQLIQIFFFR) the chain is on the extracellular side. A helical transmembrane segment spans residues 1243–1263 (LNLLITLLGLLHGLVFLPVVL). Over 1264 to 1333 (SYLGPDVNQA…SSLPKSDQKF (70 aa)) the chain is Cytoplasmic.

Belongs to the patched family. Interacts with RAB11A, MYO5B and RAB11FIP2. Interaction with RAB11A, MYO5B and RAB11FIP2 is required for proper transport to the plasma membrane upon cholesterol depletion. Interacts with NPC2. Interacts with LIMA1. Post-translationally, highly glycosylated. In terms of tissue distribution, expressed in small intestine, stomach and muscle, along with detectable expression in lung, heart, gall bladder, brain, testis, skin and liver. Expression in liver is extremely low.

The protein localises to the apical cell membrane. The protein resides in the cell membrane. It carries out the reaction cholesterol(in) = cholesterol(out). The catalysed reaction is sitosterol(out) = sitosterol(in). Its function is as follows. Plays a major role in cholesterol homeostasis. Critical for the uptake of cholesterol across the plasma membrane of the intestinal enterocyte. Involved in plant sterol absorption, it transports sitosterol, although at lower rates than cholesterol. May have a function in the transport of multiple lipids and their homeostasis, thereby influencing lipid metabolism regulation. May be involved in caveolin trafficking from the plasma membrane. Acts as a negative regulator of NPC2 and down-regulates its expression and secretion by inhibiting its maturation and accelerating its degradation. In Mus musculus (Mouse), this protein is NPC1-like intracellular cholesterol transporter 1.